We begin with the raw amino-acid sequence, 318 residues long: Probable casein kinase I homolog ECU11_1980 (318 aa).

The region spanning 8 to 276 is the Protein kinase domain; the sequence is YTICREIGKG…YLNSLLDKIF (269 aa). ATP is bound by residues 14–22 and lysine 37; that span reads IGKGGFGKV. Aspartate 129 acts as the Proton acceptor in catalysis.

The protein belongs to the protein kinase superfamily. CK1 Ser/Thr protein kinase family. Casein kinase I subfamily.

Its subcellular location is the nucleus. It catalyses the reaction L-seryl-[protein] + ATP = O-phospho-L-seryl-[protein] + ADP + H(+). The enzyme catalyses L-threonyl-[protein] + ATP = O-phospho-L-threonyl-[protein] + ADP + H(+). Functionally, involved in DNA repair. May regulate the activity of protein(s) involved in double strand break repair caused by gamma rays. This chain is Probable casein kinase I homolog ECU11_1980, found in Encephalitozoon cuniculi (strain GB-M1) (Microsporidian parasite).